Here is a 630-residue protein sequence, read N- to C-terminus: Forkhead box protein O (630 aa).

The disordered stretch occupies residues 1 to 45 (MDGFVQEWSNLPRSDNGLHMDQLVGELPTDGGFEPQTRARSNTWP). Position 43 is a phosphothreonine; by PKB/AKT1 (T43). The segment at residues 92–198 (WGNLSYADLI…ETSRYEKRRG (107 aa)) is a DNA-binding region (fork-head). Residue S187 is modified to Phosphoserine; by PKB/AKT1. A disordered region spans residues 214–260 (GLNDATPSPSSSVSEGLDHFPESPLHSGGFQLSPDFRQRASSNASSC). A compositionally biased stretch (polar residues) spans 218–227 (ATPSPSSSVS). Position 255 is a phosphoserine; by PKB/AKT1 (S255). S258, S259, and S264 each carry phosphoserine. 2 disordered regions span residues 318-379 (SAAS…QQQQ) and 403-432 (TRDG…SLNT). Composition is skewed to low complexity over residues 332–350 (QQQQ…QLPQ) and 367–379 (QPQA…QQQQ). 2 stretches are compositionally biased toward polar residues: residues 408-417 (SPNSVTTTMS) and 423-432 (SEPSSDSLNT).

As to quaternary structure, interacts with melt.

Its subcellular location is the cytoplasm. It localises to the nucleus. In terms of biological role, transcription factor involved in the regulation of the insulin signaling pathway. Consistently activates both the downstream target Thor\d4EBP and the feedback control target InR. Involved in negative regulation of the cell cycle, modulating cell growth and proliferation. In response to cellular stresses, such as nutrient deprivation or increased levels of reactive oxygen species, foxo is activated and inhibits growth through the action of target genes such as Thor. Foxo activated in the adult fat body can regulate lifespan in adults; an insulin peptide itself may function as one secondary messenger of insulin-regulated aging. Also regulates Lip4, homolog of human acid lipases, thereby acting as a key modulator of lipid metabolism by insulin signaling and integrates insulin responses to glucose and lipid homeostasis. This chain is Forkhead box protein O, found in Drosophila grimshawi (Hawaiian fruit fly).